The chain runs to 145 residues: Cell division protein SepF (145 aa).

Positions 21-41 are disordered; sequence DKPQESTKAKEENVKPKHETP. The segment covering 23-41 has biased composition (basic and acidic residues); that stretch reads PQESTKAKEENVKPKHETP.

It belongs to the SepF family. As to quaternary structure, homodimer. Interacts with FtsZ.

The protein resides in the cytoplasm. In terms of biological role, cell division protein that is part of the divisome complex and is recruited early to the Z-ring. Probably stimulates Z-ring formation, perhaps through the cross-linking of FtsZ protofilaments. Its function overlaps with FtsA. The protein is Cell division protein SepF of Caldicellulosiruptor saccharolyticus (strain ATCC 43494 / DSM 8903 / Tp8T 6331).